The chain runs to 327 residues: Germination protease (327 aa).

Positions 1–7 are excised as a propeptide; it reads MNSVRTD.

This sequence belongs to the peptidase A25 family. As to quaternary structure, homotetramer. In terms of processing, autoproteolytically processed. The inactive tetrameric zymogen termed p46 autoprocesses to a smaller form termed p41, which is active only during spore germination.

The catalysed reaction is Endopeptidase action with P4 Glu or Asp, P1 preferably Glu &gt; Asp, P1' hydrophobic and P2' Ala.. Initiates the rapid degradation of small, acid-soluble proteins during spore germination. The sequence is that of Germination protease from Clostridium acetobutylicum (strain ATCC 824 / DSM 792 / JCM 1419 / IAM 19013 / LMG 5710 / NBRC 13948 / NRRL B-527 / VKM B-1787 / 2291 / W).